The chain runs to 1499 residues: DENN domain-containing protein 4B (1499 aa).

The segment at 26-45 (PEEKWVPEPTGPLRPPRPAE) is disordered. Pro residues predominate over residues 34–44 (PTGPLRPPRPA). In terms of domain architecture, MABP spans 44–203 (AEPITDVAVI…AVYLCYKVGL (160 aa)). The region spanning 195–369 (VYLCYKVGLA…NVPFPSPQRP (175 aa)) is the uDENN domain. The 137-residue stretch at 390–526 (PLPLSGASFL…PYKLLLATLT (137 aa)) folds into the cDENN domain. One can recognise a dDENN domain in the interval 528–644 (LYQQLDQTYT…ECSFGSARHA (117 aa)). The interval 717–744 (PQEQQGALPVPGPSRSAPSSPAPRRTKQ) is disordered. Residues 729–739 (PSRSAPSSPAP) show a composition bias toward low complexity. PPR repeat units lie at residues 775-811 (WFLC…VVLP) and 812-846 (DEVC…GIVP). 3 disordered regions span residues 890–968 (PLKD…ARGT), 988–1115 (PRGS…SLGS), and 1204–1226 (RPSA…APAP). Residues 897-915 (QQQQQQQQQQQKQQVAEQQ) are compositionally biased toward low complexity. Over residues 933-942 (RPLQRQTTWA) the composition is skewed to polar residues. The residue at position 951 (serine 951) is a Phosphoserine. The segment covering 1074-1083 (IPPPELPSDL) has biased composition (pro residues). At serine 1090 the chain carries Phosphoserine. The span at 1103-1115 (GSTASESSASLGS) shows a compositional bias: low complexity.

The protein resides in the golgi apparatus. Its function is as follows. Guanine nucleotide exchange factor (GEF) which may activate RAB10. Promotes the exchange of GDP to GTP, converting inactive GDP-bound Rab proteins into their active GTP-bound form. The sequence is that of DENN domain-containing protein 4B (Dennd4b) from Mus musculus (Mouse).